We begin with the raw amino-acid sequence, 2437 residues long: Neurogenic locus notch homolog protein 1 (2437 aa).

A signal peptide spans 1-20; the sequence is MNRFLVKLTLLTAASLATVA. EGF-like domains lie at 21-57, 58-98, 101-138, and 139-175; these read QGQR…AQCQ, FPNP…RLCL, VNHA…KTCQ, and LADP…QTCR. Over 21–1726 the chain is Extracellular; the sequence is QGQRCSEYCQ…GGPPKTGEMY (1706 aa). 111 disulfides stabilise this stretch: cysteine 25–cysteine 35, cysteine 29–cysteine 45, cysteine 47–cysteine 56, cysteine 62–cysteine 73, cysteine 67–cysteine 86, cysteine 88–cysteine 97, cysteine 105–cysteine 116, cysteine 110–cysteine 126, cysteine 128–cysteine 137, cysteine 143–cysteine 154, cysteine 148–cysteine 163, cysteine 165–cysteine 174, cysteine 181–cysteine 194, cysteine 188–cysteine 203, cysteine 205–cysteine 214, cysteine 221–cysteine 232, cysteine 226–cysteine 242, cysteine 244–cysteine 253, cysteine 260–cysteine 271, cysteine 265–cysteine 280, cysteine 282–cysteine 291, cysteine 298–cysteine 311, cysteine 305–cysteine 320, cysteine 322–cysteine 331, cysteine 338–cysteine 349, cysteine 343–cysteine 358, cysteine 360–cysteine 369, cysteine 375–cysteine 386, cysteine 380–cysteine 397, cysteine 399–cysteine 408, cysteine 415–cysteine 428, cysteine 422–cysteine 437, cysteine 439–cysteine 448, cysteine 455–cysteine 466, cysteine 460–cysteine 475, cysteine 477–cysteine 486, cysteine 493–cysteine 503, cysteine 498–cysteine 512, cysteine 514–cysteine 523, cysteine 530–cysteine 541, cysteine 535–cysteine 550, cysteine 552–cysteine 561, cysteine 568–cysteine 578, cysteine 573–cysteine 587, cysteine 589–cysteine 598, cysteine 605–cysteine 616, cysteine 610–cysteine 625, cysteine 627–cysteine 636, cysteine 643–cysteine 653, cysteine 648–cysteine 662, cysteine 664–cysteine 673, cysteine 680–cysteine 691, cysteine 685–cysteine 700, cysteine 702–cysteine 711, cysteine 718–cysteine 728, cysteine 723–cysteine 737, cysteine 739–cysteine 748, cysteine 755–cysteine 766, cysteine 760–cysteine 775, cysteine 777–cysteine 786, cysteine 793–cysteine 804, cysteine 798–cysteine 813, cysteine 815–cysteine 824, cysteine 831–cysteine 842, cysteine 836–cysteine 853, cysteine 855–cysteine 864, cysteine 871–cysteine 882, cysteine 876–cysteine 891, cysteine 893–cysteine 902, cysteine 909–cysteine 920, cysteine 914–cysteine 929, cysteine 931–cysteine 940, cysteine 947–cysteine 958, cysteine 952–cysteine 967, cysteine 969–cysteine 978, cysteine 985–cysteine 996, cysteine 990–cysteine 1005, cysteine 1007–cysteine 1016, cysteine 1023–cysteine 1034, cysteine 1028–cysteine 1043, cysteine 1045–cysteine 1054, cysteine 1061–cysteine 1072, cysteine 1066–cysteine 1081, cysteine 1083–cysteine 1092, cysteine 1099–cysteine 1120, cysteine 1114–cysteine 1129, cysteine 1131–cysteine 1140, cysteine 1147–cysteine 1158, cysteine 1152–cysteine 1167, cysteine 1169–cysteine 1178, cysteine 1185–cysteine 1196, cysteine 1190–cysteine 1205, cysteine 1207–cysteine 1216, cysteine 1223–cysteine 1242, cysteine 1236–cysteine 1251, cysteine 1253–cysteine 1262, cysteine 1269–cysteine 1282, cysteine 1274–cysteine 1291, cysteine 1293–cysteine 1302, cysteine 1309–cysteine 1320, cysteine 1314–cysteine 1332, cysteine 1334–cysteine 1343, cysteine 1350–cysteine 1361, cysteine 1355–cysteine 1370, cysteine 1372–cysteine 1381, cysteine 1389–cysteine 1400, cysteine 1394–cysteine 1411, cysteine 1413–cysteine 1422, cysteine 1447–cysteine 1470, cysteine 1452–cysteine 1465, and cysteine 1461–cysteine 1477. The EGF-like 5; calcium-binding domain occupies 177 to 215; that stretch reads DVNECAVSPSPCRNGGTCINEVGSYLCRCPPEYTGPHCQ. In terms of domain architecture, EGF-like 6 spans 217–254; sequence LYQPCLPSPCRSGGTCVQTSDTTHTCSCLPGFTGQTCE. O-linked (Fuc...) threonine; alternate glycosylation is present at threonine 231. The O-linked (GalNAc...) threonine; alternate glycan is linked to threonine 231. Positions 256–292 constitute an EGF-like 7; calcium-binding domain; the sequence is NVDDCTQHACENGGPCIDGINTYNCHCDKHWTGQYCT. The EGF-like 8; calcium-binding domain occupies 294–332; the sequence is DVDECELSPNACQNGGTCHNTIGGFHCVCVNGWTGDDCS. In terms of domain architecture, EGF-like 9; calcium-binding spans 334-370; it reads NIDDCASAACSHGATCHDRVASFFCECPHGRTGLLCH. An EGF-like 10 domain is found at 371–409; it reads LDDACISNPCQKGSNCDTNPVSGKAICTCPPGYTGSACN. The region spanning 411–449 is the EGF-like 11; calcium-binding domain; the sequence is DIDECSLGANPCEHGGRCLNTKGSFQCKCLQGYEGPRCE. One can recognise an EGF-like 12; calcium-binding domain in the interval 451-487; that stretch reads DVNECKSNPCQNDATCLDQIGGFHCICMPGYEGVFCQ. The 36-residue stretch at 489–524 folds into the EGF-like 13; calcium-binding domain; it reads NSDDCASQPCLNGKCIDKINSFHCECPKGFSGSLCQ. An EGF-like 14; calcium-binding domain is found at 526–562; that stretch reads DVDECASTPCKNGAKCTDGPNKYTCECTPGFSGIHCE. The EGF-like 15; calcium-binding domain maps to 564-599; sequence DINECASSPCHYGVCRDGVASFTCDCRPGYTGRLCE. Residues 601–637 enclose the EGF-like 16; calcium-binding domain; it reads NINECLSQPCRNGGTCQDRENAYICTCPKGTTGVNCE. The EGF-like 17; calcium-binding domain maps to 639–674; that stretch reads NIDDCKRKPCDYGKCIDKINGYECVCEPGYSGSMCN. Residues 676-712 form the EGF-like 18; calcium-binding domain; sequence NIDDCALNPCHNGGTCIDGVNSFTCLCPDGFRDATCL. Residues 714-749 form the EGF-like 19; calcium-binding domain; that stretch reads QHNECSSNPCIHGSCLDQINSYRCVCEAGWMGRNCD. One can recognise an EGF-like 20; calcium-binding domain in the interval 751–787; it reads NINECLSNPCVNGGTCKDMTSGYLCTCRAGFSGPNCQ. Positions 789 to 825 constitute an EGF-like 21; calcium-binding domain; sequence NINECASNPCLNQGSCIDDVAGFKCNCMLPYTGEVCE. Residues 827 to 865 form the EGF-like 22 domain; it reads VLAPCSPRPCKNGGVCRESEDFQSFSCNCPAGWQGQTCE. Residues 867–903 form the EGF-like 23; calcium-binding domain; sequence DINECVRNPCTNGGVCENLRGGFQCRCNPGFTGALCE. Residues 905 to 941 enclose the EGF-like 24; calcium-binding domain; that stretch reads DIDDCEPNPCSNGGVCQDRVNGFVCVCLAGFRGERCA. In terms of domain architecture, EGF-like 25; calcium-binding spans 943–979; it reads DIDECVSAPCRNGGNCTDCVNSYTCSCPAGFSGINCE. Asparagine 957 is a glycosylation site (N-linked (GlcNAc...) asparagine). Residues 981–1017 enclose the EGF-like 26 domain; the sequence is NTPDCTESSCFNGGTCVDGISSFSCVCLPGFTGNYCQ. In terms of domain architecture, EGF-like 27; calcium-binding spans 1019-1055; that stretch reads DVNECDSRPCQNGGSCQDGYGTYKCTCPHGYTGLNCQ. EGF-like domains are found at residues 1057–1093 and 1095–1141; these read LVRW…IYCD and PSVS…SYCQ. The EGF-like 30; calcium-binding domain maps to 1143–1179; that stretch reads QVDECQPNPCQNGATCTDYLGGYSCECVPGYHGMNCS. Residue asparagine 1177 is glycosylated (N-linked (GlcNAc...) asparagine). The EGF-like 31; calcium-binding domain occupies 1181 to 1217; that stretch reads EINECLSQPCQNGGTCIDLVNTYKCSCPRGTQGVHCE. The 45-residue stretch at 1219–1263 folds into the EGF-like 32; calcium-binding domain; that stretch reads DIDDCSPSVDPLTGEPRCFNGGRCVDRVGGYGCVCPAGFVGERCE. 4 consecutive EGF-like domains span residues 1265–1303, 1305–1344, 1346–1382, and 1385–1423; these read DVNE…KRCE, VFNG…SSCE, DSQS…HECQ, and MDSP…LLCH. An O-linked (Fuc...) threonine; alternate glycan is attached at threonine 1399. A glycan (O-linked (GalNAc...) threonine; alternate) is linked at threonine 1399. LNR repeat units follow at residues 1447 to 1487, 1488 to 1525, and 1526 to 1566; these read CEIA…PWQN, CSAA…LEGQ, and CNPL…VPQK. N-linked (GlcNAc...) asparagine glycosylation occurs at asparagine 1487. 6 disulfide bridges follow: cysteine 1488–cysteine 1512, cysteine 1494–cysteine 1507, cysteine 1503–cysteine 1519, cysteine 1526–cysteine 1552, cysteine 1534–cysteine 1547, and cysteine 1543–cysteine 1559. Asparagine 1585 carries N-linked (GlcNAc...) asparagine glycosylation. A helical membrane pass occupies residues 1727–1747; sequence PMFLVLLALAVLALAAVGVVV. The Cytoplasmic segment spans residues 1748-2437; the sequence is SRKRKREHGQ…QMNHIPEAFK (690 aa). Residues 1770-1790 are disordered; that stretch reads KKKRREPVGEDSVGLKPLKNS. 6 ANK repeats span residues 1867-1910, 1915-1944, 1948-1978, 1982-2011, 2015-2044, and 2048-2077; these read DGFT…NLHN, TGET…DANV, MGRT…DLDA, DGTT…DPNA, SGKS…NKDL, and KEET…NRDI. Disordered regions lie at residues 2127–2174 and 2356–2437; these read IKPS…GGIM and RMAP…EAFK. Positions 2356–2387 are enriched in polar residues; the sequence is RMAPPISSTQFLTPPSQHSYSNPMDNTPNHQQ. A compositionally biased stretch (low complexity) spans 2396–2411; that stretch reads PSAGSPDQWSSSSPHS. A compositionally biased stretch (polar residues) spans 2412 to 2429; that stretch reads NLSDWSEGISSPPTSMQM.

It belongs to the NOTCH family. Post-translationally, synthesized in the endoplasmic reticulum as an inactive form which is proteolytically cleaved by a furin-like convertase in the trans-Golgi network before it reaches the plasma membrane to yield an active, ligand-accessible form. Cleavage results in a C-terminal fragment N(TM) and a N-terminal fragment N(EC). Following ligand binding, it is cleaved by adam17 to yield a membrane-associated intermediate fragment called notch extracellular truncation (NEXT). Following endocytosis, this fragment is then cleaved by presenilin dependent gamma-secretase to release a Notch-derived peptide containing the intracellular domain (NICD) from the membrane. In terms of processing, O-glycosylated on the EGF-like domains. Contains both O-linked fucose and O-linked glucose. O-linked glycosylation by galnt11 is involved in determination of left/right symmetry: glycosylation promotes activation of notch1, possibly by promoting cleavage by adam17, modulating the balance between motile and immotile (sensory) cilia at the left-right organiser (LRO).

It is found in the cell membrane. The protein resides in the nucleus. Its function is as follows. Functions as a receptor for membrane-bound ligands Jagged-1 (JAG1), Jagged-2 (JAG2) and Delta-1 (DLL1) to regulate cell-fate determination. Upon ligand activation through the released notch intracellular domain (NICD) it forms a transcriptional activator complex with RBPJ/RBPSUH and activates genes of the enhancer of split locus. Affects the implementation of differentiation, proliferation and apoptotic programs. Involved in angiogenesis; negatively regulates endothelial cell proliferation and migration and angiogenic sprouting. Involved in the maturation of both CD4(+) and CD8(+) cells in the thymus. Important for follicular differentiation and possibly cell fate selection within the follicle. During cerebellar development, functions as a receptor for neuronal DNER and is involved in the differentiation of Bergmann glia. Represses neuronal and myogenic differentiation. May play an essential role in postimplantation development, probably in some aspect of cell specification and/or differentiation. May be involved in mesoderm development, somite formation and neurogenesis. Involved in determination of left/right symmetry by modulating the balance between motile and immotile (sensory) cilia at the left-right organiser (LRO). The chain is Neurogenic locus notch homolog protein 1 (notch1a) from Danio rerio (Zebrafish).